A 192-amino-acid chain; its full sequence is Protein MTH_857 (192 aa).

In terms of domain architecture, AMMECR1 spans 9–192; it reads DEGRTLVKIA…FQAQIFHEDG (184 aa).

This is Protein MTH_857 from Methanothermobacter thermautotrophicus (strain ATCC 29096 / DSM 1053 / JCM 10044 / NBRC 100330 / Delta H) (Methanobacterium thermoautotrophicum).